We begin with the raw amino-acid sequence, 632 residues long: 1-deoxy-D-xylulose-5-phosphate synthase (632 aa).

Thiamine diphosphate contacts are provided by residues H79 and G120–A122. D152 is a binding site for Mg(2+). Thiamine diphosphate contacts are provided by residues G153 to S154, N181, F293, and E377. N181 is a Mg(2+) binding site.

This sequence belongs to the transketolase family. DXPS subfamily. As to quaternary structure, homodimer. The cofactor is Mg(2+). Thiamine diphosphate serves as cofactor.

The enzyme catalyses D-glyceraldehyde 3-phosphate + pyruvate + H(+) = 1-deoxy-D-xylulose 5-phosphate + CO2. The protein operates within metabolic intermediate biosynthesis; 1-deoxy-D-xylulose 5-phosphate biosynthesis; 1-deoxy-D-xylulose 5-phosphate from D-glyceraldehyde 3-phosphate and pyruvate: step 1/1. Functionally, catalyzes the acyloin condensation reaction between C atoms 2 and 3 of pyruvate and glyceraldehyde 3-phosphate to yield 1-deoxy-D-xylulose-5-phosphate (DXP). This is 1-deoxy-D-xylulose-5-phosphate synthase from Phocaeicola vulgatus (strain ATCC 8482 / DSM 1447 / JCM 5826 / CCUG 4940 / NBRC 14291 / NCTC 11154) (Bacteroides vulgatus).